Here is a 171-residue protein sequence, read N- to C-terminus: Crossover junction endodeoxyribonuclease RuvC (171 aa).

Catalysis depends on residues Asp-7, Glu-66, and Asp-138. Asp-7, Glu-66, and Asp-138 together coordinate Mg(2+).

The protein belongs to the RuvC family. As to quaternary structure, homodimer which binds Holliday junction (HJ) DNA. The HJ becomes 2-fold symmetrical on binding to RuvC with unstacked arms; it has a different conformation from HJ DNA in complex with RuvA. In the full resolvosome a probable DNA-RuvA(4)-RuvB(12)-RuvC(2) complex forms which resolves the HJ. Mg(2+) serves as cofactor.

It is found in the cytoplasm. It catalyses the reaction Endonucleolytic cleavage at a junction such as a reciprocal single-stranded crossover between two homologous DNA duplexes (Holliday junction).. In terms of biological role, the RuvA-RuvB-RuvC complex processes Holliday junction (HJ) DNA during genetic recombination and DNA repair. Endonuclease that resolves HJ intermediates. Cleaves cruciform DNA by making single-stranded nicks across the HJ at symmetrical positions within the homologous arms, yielding a 5'-phosphate and a 3'-hydroxyl group; requires a central core of homology in the junction. The consensus cleavage sequence is 5'-(A/T)TT(C/G)-3'. Cleavage occurs on the 3'-side of the TT dinucleotide at the point of strand exchange. HJ branch migration catalyzed by RuvA-RuvB allows RuvC to scan DNA until it finds its consensus sequence, where it cleaves and resolves the cruciform DNA. This is Crossover junction endodeoxyribonuclease RuvC from Francisella philomiragia subsp. philomiragia (strain ATCC 25017 / CCUG 19701 / FSC 153 / O#319-036).